Consider the following 261-residue polypeptide: Adenosylcobinamide-GDP ribazoletransferase (261 aa).

The next 5 membrane-spanning stretches (helical) occupy residues tyrosine 31–phenylalanine 51, leucine 59–isoleucine 79, phenylalanine 125–valine 145, valine 183–valine 203, and leucine 240–tryptophan 260.

The protein belongs to the CobS family. Mg(2+) serves as cofactor.

It localises to the cell membrane. The catalysed reaction is alpha-ribazole + adenosylcob(III)inamide-GDP = adenosylcob(III)alamin + GMP + H(+). It catalyses the reaction alpha-ribazole 5'-phosphate + adenosylcob(III)inamide-GDP = adenosylcob(III)alamin 5'-phosphate + GMP + H(+). It participates in cofactor biosynthesis; adenosylcobalamin biosynthesis; adenosylcobalamin from cob(II)yrinate a,c-diamide: step 7/7. Joins adenosylcobinamide-GDP and alpha-ribazole to generate adenosylcobalamin (Ado-cobalamin). Also synthesizes adenosylcobalamin 5'-phosphate from adenosylcobinamide-GDP and alpha-ribazole 5'-phosphate. The chain is Adenosylcobinamide-GDP ribazoletransferase from Lachnoclostridium phytofermentans (strain ATCC 700394 / DSM 18823 / ISDg) (Clostridium phytofermentans).